The primary structure comprises 182 residues: MILSDRTINQMIKNGELVVEPLEEYQIQPASIDLRLGSSFLKIDENLMEVMTLNDEIKYVNLERKEIIVPPNSFLLATTREYIKLPPDITAFVEGRSSIGRMGLFIQNAGWVDPGFEGQITLELYNANRLPIKLTAGRRICQLVLARMDKEAKTPYQGKYLYQKKAVGSRVYQDLENKQNKN.

DCTP is bound by residues Arg-96 to Arg-101, Asp-113, Thr-121 to Glu-123, Gln-142, Tyr-156, and Gln-163. The active-site Proton donor/acceptor is the Glu-123.

This sequence belongs to the dCTP deaminase family. Homotrimer.

It catalyses the reaction dCTP + 2 H2O = dUMP + NH4(+) + diphosphate. It participates in pyrimidine metabolism; dUMP biosynthesis; dUMP from dCTP: step 1/1. In terms of biological role, bifunctional enzyme that catalyzes both the deamination of dCTP to dUTP and the hydrolysis of dUTP to dUMP without releasing the toxic dUTP intermediate. In Halothermothrix orenii (strain H 168 / OCM 544 / DSM 9562), this protein is dCTP deaminase, dUMP-forming.